A 384-amino-acid polypeptide reads, in one-letter code: Urea transporter 1 (384 aa).

A run of 5 helical transmembrane segments spans residues 61-81 (ISQV…AGLL), 85-105 (PWWA…ALLL), 111-131 (AIAA…MAVF), 138-158 (FWWL…FSSA), and 168-188 (LPVF…ATGH). A glycan (N-linked (GlcNAc...) asparagine) is linked at Asn-206. A run of 4 helical transmembrane segments spans residues 250 to 270 (LMCL…LSLA), 279 to 299 (GLWG…FMAL), 305 to 325 (LLAL…THLM), and 327 to 347 (AVHL…FLLL).

It belongs to the urea transporter family. In terms of assembly, homotrimer; each subunit contains a pore through which urea permeates. Identified in a complex with STOM. Expressed in brain, spleen, kidney, testis and lung, with highest levels in brain.

It is found in the cell membrane. It localises to the basolateral cell membrane. The enzyme catalyses urea(in) = urea(out). Mediates the transport of urea driven by a concentration gradient across the cell membrane. Mediates the transport of urea across the cell membranes of erythrocytes and the renal inner medullary collecting duct which is critical to the urinary concentrating mechanism. Facilitates water transport in erythrocytes. In Rattus norvegicus (Rat), this protein is Urea transporter 1 (Slc14a1).